The sequence spans 558 residues: DNA ligase B (558 aa).

The active-site N6-AMP-lysine intermediate is Lys-126.

It belongs to the NAD-dependent DNA ligase family. LigB subfamily.

It catalyses the reaction NAD(+) + (deoxyribonucleotide)n-3'-hydroxyl + 5'-phospho-(deoxyribonucleotide)m = (deoxyribonucleotide)n+m + AMP + beta-nicotinamide D-nucleotide.. Its function is as follows. Catalyzes the formation of phosphodiester linkages between 5'-phosphoryl and 3'-hydroxyl groups in double-stranded DNA using NAD as a coenzyme and as the energy source for the reaction. This Pseudomonas fluorescens (strain Pf0-1) protein is DNA ligase B.